We begin with the raw amino-acid sequence, 274 residues long: Secreted RxLR effector protein 40 (274 aa).

The signal sequence occupies residues 1–21 (MRLYTQVVAASLVATLAIVDS). Residues 35–53 (RFLRQDNATVARVSEDGER) carry the RxLR-dEER motif. Residues Asn-41, Asn-74, and Asn-258 are each glycosylated (N-linked (GlcNAc...) asparagine).

Belongs to the RxLR effector family.

It is found in the secreted. Its subcellular location is the host nucleus. The protein resides in the host cytoplasm. Its function is as follows. Secreted effector that completely suppresses the host cell death induced by cell death-inducing proteins. The chain is Secreted RxLR effector protein 40 from Plasmopara viticola (Downy mildew of grapevine).